Reading from the N-terminus, the 683-residue chain is Methionine--tRNA ligase (683 aa).

The 'HIGH' region signature appears at 23-33 (PYANGSAHIGH). Cys-154, Cys-157, Cys-166, and Cys-170 together coordinate Zn(2+). The 'KMSKS' region motif lies at 335 to 339 (KFSKS). Lys-338 serves as a coordination point for ATP. A tRNA-binding domain is found at 583 to 683 (DFAKMELRVG…KPSEPGTKVR (101 aa)).

It belongs to the class-I aminoacyl-tRNA synthetase family. MetG type 1 subfamily. Homodimer. The cofactor is Zn(2+).

The protein localises to the cytoplasm. It catalyses the reaction tRNA(Met) + L-methionine + ATP = L-methionyl-tRNA(Met) + AMP + diphosphate. Functionally, is required not only for elongation of protein synthesis but also for the initiation of all mRNA translation through initiator tRNA(fMet) aminoacylation. The polypeptide is Methionine--tRNA ligase (Methanocella arvoryzae (strain DSM 22066 / NBRC 105507 / MRE50)).